The primary structure comprises 760 residues: Leucine-rich repeat extensin-like protein 3 (760 aa).

The signal sequence occupies residues 1 to 20 (MKKTIQILLFFFFLINLTNA). N16 is a glycosylation site (N-linked (GlcNAc...) asparagine). One copy of the LRR 1 repeat lies at 21–45 (LSISSDGGVLSDNEVRHIQRRQLLE). 2 N-linked (GlcNAc...) asparagine glycosylation sites follow: N86 and N98. LRR repeat units follow at residues 113–137 (IRTV…LGLL), 138–160 (SDLA…RFNR), 161–185 (LKLL…VLQL), 186–209 (PSLK…LFSK), 211–232 (LDAI…FGDS), 234–255 (VSVI…LVEM), 256–279 (KNLN…IGRL), 281–303 (NVTV…VGEM), and 304–327 (VSVE…ICQL). N281 carries N-linked (GlcNAc...) asparagine glycosylation. An N-linked (GlcNAc...) asparagine glycan is attached at N332. Disordered regions lie at residues 389–502 (GRSV…PPPP), 515–610 (PPVY…YSPP), and 663–748 (PPPP…PVIG). Composition is skewed to pro residues over residues 394–415 (PRPP…PPAP) and 423–502 (LTSP…PPPP). The segment at 409–758 (SPPPPAPIFS…VSYASPPPPP (350 aa)) is contains the Ser-Pro(4) repeats. The span at 663-745 (PPPPVHYSSP…SPEYEGPLPP (83 aa)) shows a compositional bias: pro residues.

Interacts with SH3P1. In terms of processing, hydroxylated on proline residues in the S-P-P-P-P repeat. Post-translationally, O-glycosylated on hydroxyprolines. As to expression, expressed in roots, stems, leaves and flowers, mostly in vascular tissues.

The protein localises to the secreted. It localises to the cell wall. In terms of biological role, modulates cell morphogenesis by regulating cell wall formation and assembly, and/or growth polarization. The chain is Leucine-rich repeat extensin-like protein 3 (LRX3) from Arabidopsis thaliana (Mouse-ear cress).